A 612-amino-acid chain; its full sequence is Methionine--tRNA ligase (612 aa).

The 'HIGH' region motif lies at 12 to 22 (PYANGPRHIGH). Residues Cys-144, Cys-147, Cys-157, and Cys-160 each coordinate Zn(2+). The 'KMSKS' region signature appears at 350-354 (KFSSS). Ser-353 serves as a coordination point for ATP. A disordered region spans residues 580–612 (IQPGTQLSKPKPLFPKLDPELAETGPEWAPVQK).

It belongs to the class-I aminoacyl-tRNA synthetase family. MetG type 1 subfamily. As to quaternary structure, monomer. The cofactor is Zn(2+).

It localises to the cytoplasm. The enzyme catalyses tRNA(Met) + L-methionine + ATP = L-methionyl-tRNA(Met) + AMP + diphosphate. In terms of biological role, is required not only for elongation of protein synthesis but also for the initiation of all mRNA translation through initiator tRNA(fMet) aminoacylation. This Corynebacterium jeikeium (strain K411) protein is Methionine--tRNA ligase.